The primary structure comprises 326 residues: Target of rapamycin complex subunit LST8 (326 aa).

Met1 carries the post-translational modification N-acetylmethionine. WD repeat units lie at residues 1 to 37, 40 to 80, 83 to 122, 126 to 165, and 168 to 207; these read MNTT…CTRT, HQDS…PIIS, GVSK…LQCQ, QVNA…NEQL, and EPES…GDDV. Thr51 carries the phosphothreonine modification. A Glycyl lysine isopeptide (Lys-Gly) (interchain with G-Cter in SUMO3) cross-link involves residue Lys86. Residues Lys215, Lys245, and Lys261 each participate in a glycyl lysine isopeptide (Lys-Gly) (interchain with G-Cter in SUMO3) cross-link. The WD 6 repeat unit spans residues 218 to 257; the sequence is AHTRYALQCRFSPDSTLLATCSADQTCKIWRTSNFSLMTE. One copy of the WD 7 repeat lies at 268-309; sequence SSRGWMWGCAFSGDSQYIVTASSDNLARLWCVETGEIKREYG. Residue Lys305 forms a Glycyl lysine isopeptide (Lys-Gly) (interchain with G-Cter in SUMO3); alternate linkage. Residues Lys305 and Lys313 each participate in a glycyl lysine isopeptide (Lys-Gly) (interchain with G-Cter in ubiquitin); alternate cross-link. Lys313 participates in a covalent cross-link: Glycyl lysine isopeptide (Lys-Gly) (interchain with G-Cter in SUMO1); alternate.

This sequence belongs to the WD repeat LST8 family. In terms of assembly, part of the mechanistic target of rapamycin complex 1 (mTORC1) which contains MTOR, MLST8 and RPTOR. mTORC1 associates with AKT1S1/PRAS40, which inhibits its activity. mTORC1 binds to and is inhibited by FKBP12-rapamycin. Within mTORC1, interacts directly with MTOR and RPTOR. Component of the mechanistic target of rapamycin complex 2 (mTORC2), consisting in two heterotretramers composed of MTOR, MLST8, RICTOR and MAPKAP1/SIN1. Contrary to mTORC1, mTORC2 does not bind to and is not sensitive to FKBP12-rapamycin. mTORC1 and mTORC2 associate with DEPTOR, which regulates their activity. Interacts with RHEB. Interacts with MEAK7. Interacts with SIK3. Interacts with SLC38A7; this interaction promotes the recruitment of mTORC1 to the lysosome and its subsequent activation. Post-translationally, phosphorylation at Thr-51 by CDK1 promotes ubiquitination by the SCF(FBXW7) complex, followed by degradation. In terms of processing, ubiquitination by the SCF(FBXW7) and SCF(FBXW11) complexes following phosphorylation at Thr-51 by CDK1, leads to its degradation by the proteasome. Ubiquitination at Lys-305 and Lys-313 by TRAF2 via 'Lys-63'-linked polyubiquitin chains inhibits formation of the mTORC2 complex, while promoting formation of the mTORC1 complex: ubiquitination disrupts the interaction between MLST8 and MAPKAP1/SIN1 to favor mTORC1 assembly. Deubiquitination at Lys-305 and Lys-313 by OTUD7B promotes MLST8 interaction with MAPKAP1/SIN1, facilitating mTORC2 assembly. Sumoylation with SUMO1, SUMO2 and SUMO3 promotes assembly of both mTORC1 and mTORC2 complexes.

It is found in the lysosome membrane. The protein localises to the cytoplasm. Its function is as follows. Subunit of both mTORC1 and mTORC2, which regulates cell growth and survival in response to nutrient and hormonal signals. mTORC1 is activated in response to growth factors or amino acids. In response to nutrients, mTORC1 is recruited to the lysosome membrane and promotes protein, lipid and nucleotide synthesis by phosphorylating several substrates, such as ribosomal protein S6 kinase (RPS6KB1 and RPS6KB2) and EIF4EBP1 (4E-BP1). In the same time, it inhibits catabolic pathways by phosphorylating the autophagy initiation components ULK1 and ATG13, as well as transcription factor TFEB, a master regulators of lysosomal biogenesis and autophagy. The mTORC1 complex is inhibited in response to starvation and amino acid depletion. Within mTORC1, MLST8 interacts directly with MTOR and enhances its kinase activity. In nutrient-poor conditions, stabilizes the MTOR-RPTOR interaction and favors RPTOR-mediated inhibition of MTOR activity. As part of the mTORC2 complex, transduces signals from growth factors to pathways involved in proliferation, cytoskeletal organization, lipogenesis and anabolic output. mTORC2 is also activated by growth factors, but seems to be nutrient-insensitive. In response to growth factors, mTORC2 phosphorylates and activates AGC protein kinase family members, including AKT (AKT1, AKT2 and AKT3), PKC (PRKCA, PRKCB and PRKCE) and SGK1. mTORC2 functions upstream of Rho GTPases to regulate the actin cytoskeleton, probably by activating one or more Rho-type guanine nucleotide exchange factors. mTORC2 promotes the serum-induced formation of stress-fibers or F-actin. mTORC2 plays a critical role in AKT1 activation by mediating phosphorylation of different sites depending on the context, such as 'Thr-450', 'Ser-473', 'Ser-477' or 'Thr-479', facilitating the phosphorylation of the activation loop of AKT1 on 'Thr-308' by PDPK1/PDK1 which is a prerequisite for full activation. mTORC2 regulates the phosphorylation of SGK1 at 'Ser-422'. mTORC2 also modulates the phosphorylation of PRKCA on 'Ser-657'. Within mTORC2, MLST8 acts as a bridge between MAPKAP1/SIN1 and MTOR. This chain is Target of rapamycin complex subunit LST8, found in Mus musculus (Mouse).